The primary structure comprises 506 residues: Cysteine--tRNA ligase (506 aa).

Cys-34 contacts Zn(2+). The 'HIGH' region motif lies at 36-46 (PTVYDFAHIGN). The Zn(2+) site is built by Cys-230, His-269, and Glu-273. Residues 302-306 (KMSKS) carry the 'KMSKS' region motif. ATP is bound at residue Lys-305.

Belongs to the class-I aminoacyl-tRNA synthetase family. Monomer. Zn(2+) is required as a cofactor.

Its subcellular location is the cytoplasm. The catalysed reaction is tRNA(Cys) + L-cysteine + ATP = L-cysteinyl-tRNA(Cys) + AMP + diphosphate. This Brucella abortus (strain S19) protein is Cysteine--tRNA ligase.